A 336-amino-acid chain; its full sequence is Protein FPV127 (336 aa).

The segment at 1–22 (MGGGLVLPTRDPPKEQDTSETA) is disordered.

It belongs to the poxviruses A16/G9/J5 family.

The protein is Protein FPV127 of Vertebrata (FPV).